The chain runs to 595 residues: Phosphomethylpyrimidine synthase (595 aa).

Residues 97–120 show a composition bias toward basic and acidic residues; sequence GRDVRPEDNGFTKDDDPRAAREVF. The segment at 97 to 134 is disordered; sequence GRDVRPEDNGFTKDDDPRAAREVFPRTSSHKPLRAKKG. Positions 124–133 are enriched in basic residues; sequence SSHKPLRAKK. Residues Asn202, Met231, Tyr260, His296, 316–318, 357–360, and Glu396 each bind substrate; these read SRG and DGLR. His400 contacts Zn(2+). Tyr423 lines the substrate pocket. His464 contributes to the Zn(2+) binding site. Residues Cys544, Cys547, and Cys552 each coordinate [4Fe-4S] cluster.

Belongs to the ThiC family. The cofactor is [4Fe-4S] cluster.

It catalyses the reaction 5-amino-1-(5-phospho-beta-D-ribosyl)imidazole + S-adenosyl-L-methionine = 4-amino-2-methyl-5-(phosphooxymethyl)pyrimidine + CO + 5'-deoxyadenosine + formate + L-methionine + 3 H(+). The protein operates within cofactor biosynthesis; thiamine diphosphate biosynthesis. In terms of biological role, catalyzes the synthesis of the hydroxymethylpyrimidine phosphate (HMP-P) moiety of thiamine from aminoimidazole ribotide (AIR) in a radical S-adenosyl-L-methionine (SAM)-dependent reaction. This is Phosphomethylpyrimidine synthase from Halalkalibacterium halodurans (strain ATCC BAA-125 / DSM 18197 / FERM 7344 / JCM 9153 / C-125) (Bacillus halodurans).